Reading from the N-terminus, the 150-residue chain is Ribonuclease H (150 aa).

Residues 1–141 (MKSIEVHTDG…VDVLARNQAI (141 aa)) form the RNase H type-1 domain. Mg(2+) is bound by residues Asp-9, Glu-47, Asp-69, and Asp-133.

Belongs to the RNase H family. In terms of assembly, monomer. Requires Mg(2+) as cofactor.

Its subcellular location is the cytoplasm. It carries out the reaction Endonucleolytic cleavage to 5'-phosphomonoester.. Endonuclease that specifically degrades the RNA of RNA-DNA hybrids. The polypeptide is Ribonuclease H (Xanthomonas campestris pv. campestris (strain 8004)).